A 466-amino-acid polypeptide reads, in one-letter code: F-box only protein 15 (466 aa).

An F-box domain is found at S27 to I73.

As to quaternary structure, directly interacts with SKP1 and CUL1.

In terms of biological role, substrate-recognition component of the SCF (SKP1-CUL1-F-box protein)-type E3 ubiquitin ligase complex. This chain is F-box only protein 15 (FBXO15), found in Bos taurus (Bovine).